Reading from the N-terminus, the 301-residue chain is ADP,ATP carrier protein 1 (301 aa).

3 Solcar repeats span residues 8 to 100 (YGFA…YKQV), 113 to 203 (RYFL…AKGM), and 210 to 299 (TSIF…VKAL). 5 helical membrane-spanning segments follow: residues 10–39 (FAKD…LLLQ), 77–101 (LANV…KQVF), 112–132 (WRYF…SLCF), 181–201 (VSVQ…DTAK), and 213–233 (FVSW…SYPF). The ADP site is built by Arg-82 and Lys-94. Arg-237 contacts ADP. The important for transport activity stretch occupies residues 237-242 (RRRMMM). The Nucleotide carrier signature motif motif lies at 237 to 242 (RRRMMM). Residues 276–293 (AFSNVLRGTGGALVLVFY) form a helical membrane-spanning segment.

The protein belongs to the mitochondrial carrier (TC 2.A.29) family. Monomer.

It is found in the mitochondrion inner membrane. It carries out the reaction ADP(in) + ATP(out) = ADP(out) + ATP(in). Its activity is regulated as follows. The matrix-open state (m-state) is inhibited by the membrane-permeable bongkrekic acid (BKA). The cytoplasmic-open state (c-state) is inhibited by the membrane-impermeable toxic inhibitor carboxyatractyloside (CATR). In terms of biological role, ADP:ATP antiporter that mediates import of ADP into the mitochondrial matrix for ATP synthesis, and export of ATP out to fuel the cell. Cycles between the cytoplasmic-open state (c-state) and the matrix-open state (m-state): operates by the alternating access mechanism with a single substrate-binding site intermittently exposed to either the cytosolic (c-state) or matrix (m-state) side of the inner mitochondrial membrane. This Anopheles gambiae (African malaria mosquito) protein is ADP,ATP carrier protein 1.